Consider the following 72-residue polypeptide: Translation initiation factor IF-1 (72 aa).

Residues M1–K72 form the S1-like domain.

It belongs to the IF-1 family. In terms of assembly, component of the 30S ribosomal translation pre-initiation complex which assembles on the 30S ribosome in the order IF-2 and IF-3, IF-1 and N-formylmethionyl-tRNA(fMet); mRNA recruitment can occur at any time during PIC assembly.

Its subcellular location is the cytoplasm. In terms of biological role, one of the essential components for the initiation of protein synthesis. Stabilizes the binding of IF-2 and IF-3 on the 30S subunit to which N-formylmethionyl-tRNA(fMet) subsequently binds. Helps modulate mRNA selection, yielding the 30S pre-initiation complex (PIC). Upon addition of the 50S ribosomal subunit IF-1, IF-2 and IF-3 are released leaving the mature 70S translation initiation complex. The polypeptide is Translation initiation factor IF-1 (Streptococcus agalactiae serotype Ia (strain ATCC 27591 / A909 / CDC SS700)).